The chain runs to 181 residues: ATP-dependent protease subunit HslV (181 aa).

Residue Thr-2 is part of the active site. Residues Gly-157, Cys-160, and Thr-163 each coordinate Na(+).

It belongs to the peptidase T1B family. HslV subfamily. A double ring-shaped homohexamer of HslV is capped on each side by a ring-shaped HslU homohexamer. The assembly of the HslU/HslV complex is dependent on binding of ATP.

The protein localises to the cytoplasm. It carries out the reaction ATP-dependent cleavage of peptide bonds with broad specificity.. Allosterically activated by HslU binding. Its function is as follows. Protease subunit of a proteasome-like degradation complex believed to be a general protein degrading machinery. The chain is ATP-dependent protease subunit HslV from Hahella chejuensis (strain KCTC 2396).